A 139-amino-acid chain; its full sequence is ATP synthase epsilon chain (139 aa).

The protein belongs to the ATPase epsilon chain family. As to quaternary structure, F-type ATPases have 2 components, CF(1) - the catalytic core - and CF(0) - the membrane proton channel. CF(1) has five subunits: alpha(3), beta(3), gamma(1), delta(1), epsilon(1). CF(0) has three main subunits: a, b and c.

It is found in the cell inner membrane. Functionally, produces ATP from ADP in the presence of a proton gradient across the membrane. The chain is ATP synthase epsilon chain from Enterobacter sp. (strain 638).